Consider the following 308-residue polypeptide: tRNA dimethylallyltransferase (308 aa).

14–21 contributes to the ATP binding site; that stretch reads GPTASGKT. 16–21 serves as a coordination point for substrate; the sequence is TASGKT. Interaction with substrate tRNA regions lie at residues 39 to 42, 163 to 167, and 244 to 249; these read DSAL, QRLSR, and RCVGYR.

The protein belongs to the IPP transferase family. In terms of assembly, monomer. It depends on Mg(2+) as a cofactor.

The catalysed reaction is adenosine(37) in tRNA + dimethylallyl diphosphate = N(6)-dimethylallyladenosine(37) in tRNA + diphosphate. Catalyzes the transfer of a dimethylallyl group onto the adenine at position 37 in tRNAs that read codons beginning with uridine, leading to the formation of N6-(dimethylallyl)adenosine (i(6)A). This Shewanella baltica (strain OS185) protein is tRNA dimethylallyltransferase.